The chain runs to 400 residues: Envelope glycoprotein M (400 aa).

The Intravirion portion of the chain corresponds to 1–16 (MRASKSDRFLMSSWVK). The helical transmembrane segment at 17 to 37 (LLFVAVIMYICSAVVPMAATY) threads the bilayer. Topologically, residues 38–76 (EGLGFPCYFNNLVNYSALNLTVRNSAKHLTPTLFLEKPE) are virion surface. Residues 77-97 (MLVYIFWTFIVDGIAIVYYCL) form a helical membrane-spanning segment. At 98–113 (AAVAVYRAKHVHATTM) the chain is on the intravirion side. The helical transmembrane segment at 114–134 (MSMQSWIALLGSHSVLYVAIL) threads the bilayer. At 135-152 (RMWSMQLFIHVLSYKHVL) the chain is on the virion surface side. Residues 153-173 (MAAFVYCIHFCISFAHIQSLI) form a helical membrane-spanning segment. The Intravirion segment spans residues 174 to 208 (TCNSAQWEIPLLEQHVPDNTMMESLLTRWKPVCVN). A helical membrane pass occupies residues 209–229 (LYLSTTALEMLLFSLSTMMAV). At 230–234 (GNSFY) the chain is on the virion surface side. A helical membrane pass occupies residues 235-255 (VLVSDAIFGAVNMFLALTVVW). Over 256–270 (YINTEFFLVKFMRRQ) the chain is Intravirion. The chain crosses the membrane as a helical span at residues 271–291 (VGFYVGVFVGYLILLLPVIRY). The Virion surface segment spans residues 292 to 300 (ENAFVQANL). The chain crosses the membrane as a helical span at residues 301 to 321 (HYIVAINISCIPILCILAIVI). Over 322–400 (RVIRSDWGLC…EIDETQMIFI (79 aa)) the chain is Intravirion. The tract at residues 348 to 394 (DRTPTVHQKPPPLPAKTRARAKVKDISTPAPRTQYQSDHESDSEIDE) is disordered.

This sequence belongs to the herpesviridae glycoprotein M family. Interacts (via N-terminus) with gN (via N-terminus). The gM-gN heterodimer forms the gCII complex. N-glycosylated.

The protein localises to the virion membrane. It is found in the host Golgi apparatus. It localises to the host trans-Golgi network. Its subcellular location is the host endosome membrane. The protein resides in the host nucleus inner membrane. In terms of biological role, envelope glycoprotein important for virion assembly and egress. Plays a role in the correct incorporation of gH-gL into virion membrane. Directs the glycoprotein N (gN) to the host trans-Golgi network. In Homo sapiens (Human), this protein is Envelope glycoprotein M.